Here is a 176-residue protein sequence, read N- to C-terminus: Nucleoside triphosphate/diphosphate phosphatase (176 aa).

The active-site Proton donor is Arg23. Positions 87, 103, 105, 107, 120, and 123 each coordinate Mg(2+).

Belongs to the Ntdp family. The cofactor is Mg(2+).

It catalyses the reaction a ribonucleoside 5'-triphosphate + H2O = a ribonucleoside 5'-diphosphate + phosphate + H(+). The enzyme catalyses a ribonucleoside 5'-diphosphate + H2O = a ribonucleoside 5'-phosphate + phosphate + H(+). Has nucleoside phosphatase activity towards nucleoside triphosphates and nucleoside diphosphates. This chain is Nucleoside triphosphate/diphosphate phosphatase, found in Bacillus mycoides (strain KBAB4) (Bacillus weihenstephanensis).